The sequence spans 512 residues: Lysine--tRNA ligase (512 aa).

Glu-408 and Glu-415 together coordinate Mg(2+).

This sequence belongs to the class-II aminoacyl-tRNA synthetase family. In terms of assembly, homodimer. Mg(2+) is required as a cofactor.

The protein resides in the cytoplasm. The catalysed reaction is tRNA(Lys) + L-lysine + ATP = L-lysyl-tRNA(Lys) + AMP + diphosphate. The polypeptide is Lysine--tRNA ligase (Prochlorococcus marinus (strain MIT 9312)).